The sequence spans 394 residues: Phosphoglycerate kinase (394 aa).

Residues D21–N23, R36, H59–R62, R118, and R151 contribute to the substrate site. At S183 the chain carries Phosphoserine. ATP-binding residues include K201 and G292. The residue at position 299 (T299) is a Phosphothreonine. ATP is bound by residues E323 and G350–S353.

The protein belongs to the phosphoglycerate kinase family. Monomer.

The protein localises to the cytoplasm. It carries out the reaction (2R)-3-phosphoglycerate + ATP = (2R)-3-phospho-glyceroyl phosphate + ADP. It participates in carbohydrate degradation; glycolysis; pyruvate from D-glyceraldehyde 3-phosphate: step 2/5. This chain is Phosphoglycerate kinase, found in Anoxybacillus flavithermus (strain DSM 21510 / WK1).